Here is a 377-residue protein sequence, read N- to C-terminus: Nitric oxide reductase FlRd-NAD(+) reductase (377 aa).

Belongs to the FAD-dependent oxidoreductase family. Requires FAD as cofactor.

The protein localises to the cytoplasm. The catalysed reaction is 2 reduced [nitric oxide reductase rubredoxin domain] + NAD(+) + H(+) = 2 oxidized [nitric oxide reductase rubredoxin domain] + NADH. It functions in the pathway nitrogen metabolism; nitric oxide reduction. Its function is as follows. One of at least two accessory proteins for anaerobic nitric oxide (NO) reductase. Reduces the rubredoxin moiety of NO reductase. The chain is Nitric oxide reductase FlRd-NAD(+) reductase from Enterobacter sp. (strain 638).